The primary structure comprises 225 residues: NAD(P)H-quinone oxidoreductase subunit K, chloroplastic (225 aa).

Residues C43, C44, C108, and C139 each coordinate [4Fe-4S] cluster.

The protein belongs to the complex I 20 kDa subunit family. In terms of assembly, NDH is composed of at least 16 different subunits, 5 of which are encoded in the nucleus. [4Fe-4S] cluster is required as a cofactor.

Its subcellular location is the plastid. It localises to the chloroplast thylakoid membrane. The catalysed reaction is a plastoquinone + NADH + (n+1) H(+)(in) = a plastoquinol + NAD(+) + n H(+)(out). The enzyme catalyses a plastoquinone + NADPH + (n+1) H(+)(in) = a plastoquinol + NADP(+) + n H(+)(out). Functionally, NDH shuttles electrons from NAD(P)H:plastoquinone, via FMN and iron-sulfur (Fe-S) centers, to quinones in the photosynthetic chain and possibly in a chloroplast respiratory chain. The immediate electron acceptor for the enzyme in this species is believed to be plastoquinone. Couples the redox reaction to proton translocation, and thus conserves the redox energy in a proton gradient. The protein is NAD(P)H-quinone oxidoreductase subunit K, chloroplastic of Brachypodium distachyon (Purple false brome).